The chain runs to 673 residues: Putative potassium transport system protein Kup 1 (673 aa).

13 helical membrane passes run 14-34 (GAGF…SPLY), 58-78 (LSLI…WIAL), 101-121 (WLII…ALTP), 147-167 (LPIV…QRFG), 175-195 (FGPV…INLF), 196-216 (GDFS…LLSP), 220-240 (AGIF…ALYS), 252-272 (VSWP…AAWL), 294-314 (LIIF…QALI), 345-365 (LYIP…VVYF), 374-394 (AYGL…TVYL), 403-423 (VFVV…FAAS), and 427-447 (FLHG…VMAI).

Belongs to the HAK/KUP transporter (TC 2.A.72) family.

Its subcellular location is the cell membrane. It catalyses the reaction K(+)(in) + H(+)(in) = K(+)(out) + H(+)(out). Transport of potassium into the cell. Likely operates as a K(+):H(+) symporter. This Lactococcus lactis subsp. cremoris (strain MG1363) protein is Putative potassium transport system protein Kup 1.